The chain runs to 353 residues: Photosystem II protein D1 (353 aa).

N-acetylthreonine is present on Thr-2. Thr-2 carries the post-translational modification Phosphothreonine. 3 helical membrane-spanning segments follow: residues 29–46 (YIGW…TATS), 118–133 (HFLL…EWEL), and 142–156 (WIAV…AATA). Position 118 (His-118) interacts with chlorophyll a. Tyr-126 lines the pheophytin a pocket. 2 residues coordinate [CaMn4O5] cluster: Asp-170 and Glu-189. Residues 197–218 (FHMLGVAGVFGGSLFSAMHGSL) traverse the membrane as a helical segment. Position 198 (His-198) interacts with chlorophyll a. A quinone contacts are provided by residues His-215 and 264–265 (SF). His-215 contacts Fe cation. His-272 lines the Fe cation pocket. The helical transmembrane segment at 274–288 (FLAAWPVVGIWFTAL) threads the bilayer. Positions 332, 333, 342, and 344 each coordinate [CaMn4O5] cluster. Positions 345 to 353 (AVEAPAVNG) are excised as a propeptide.

The protein belongs to the reaction center PufL/M/PsbA/D family. In terms of assembly, PSII is composed of 1 copy each of membrane proteins PsbA, PsbB, PsbC, PsbD, PsbE, PsbF, PsbH, PsbI, PsbJ, PsbK, PsbL, PsbM, PsbT, PsbX, PsbY, PsbZ, Psb30/Ycf12, at least 3 peripheral proteins of the oxygen-evolving complex and a large number of cofactors. It forms dimeric complexes. The D1/D2 heterodimer binds P680, chlorophylls that are the primary electron donor of PSII, and subsequent electron acceptors. It shares a non-heme iron and each subunit binds pheophytin, quinone, additional chlorophylls, carotenoids and lipids. D1 provides most of the ligands for the Mn4-Ca-O5 cluster of the oxygen-evolving complex (OEC). There is also a Cl(-1) ion associated with D1 and D2, which is required for oxygen evolution. The PSII complex binds additional chlorophylls, carotenoids and specific lipids. serves as cofactor. Post-translationally, tyr-161 forms a radical intermediate that is referred to as redox-active TyrZ, YZ or Y-Z. C-terminally processed by CTPA; processing is essential to allow assembly of the oxygen-evolving complex and thus photosynthetic growth.

It localises to the plastid. Its subcellular location is the chloroplast thylakoid membrane. The catalysed reaction is 2 a plastoquinone + 4 hnu + 2 H2O = 2 a plastoquinol + O2. Its function is as follows. Photosystem II (PSII) is a light-driven water:plastoquinone oxidoreductase that uses light energy to abstract electrons from H(2)O, generating O(2) and a proton gradient subsequently used for ATP formation. It consists of a core antenna complex that captures photons, and an electron transfer chain that converts photonic excitation into a charge separation. The D1/D2 (PsbA/PsbD) reaction center heterodimer binds P680, the primary electron donor of PSII as well as several subsequent electron acceptors. The sequence is that of Photosystem II protein D1 from Marchantia polymorpha (Common liverwort).